The sequence spans 805 residues: Transforming acidic coiled-coil-containing protein 1 (805 aa).

Alanine 2 bears the N-acetylalanine mark. Alanine 2 carries N-myristoyl glycine lipidation. Residues 2-55 (AFSPWQILSPVQWAKWTWSAVRGGAAGEDEAGGPEGDPEEEDSQAETKSLSFSS) are interaction with LSM7 and SNRPG. Phosphoserine occurs at positions 4, 10, and 44. The segment at 23-140 (RGGAAGEDEA…SVKNFREEPE (118 aa)) is disordered. Positions 28–45 (GEDEAGGPEGDPEEEDSQ) are enriched in acidic residues. Polar residues-rich tracts occupy residues 47–60 (ETKSLSFSSDSEGN) and 111–128 (SKTCSKPSENEVPQQAID). Over residues 130-140 (HSVKNFREEPE) the composition is skewed to basic and acidic residues. Serine 147 and serine 153 each carry phosphoserine. An interaction with TDRD7 region spans residues 152–259 (FSIETKDSTD…TNAAVEGTPL (108 aa)). Positions 206–427 (EASAEADLKA…DPDNFDESMD (222 aa)) are interaction with YEATS4. SPAZ domains lie at 215–297 (AGNS…TPGT) and 359–507 (SKSA…TDEE). The segment at 215–457 (AGNSCPELVP…VNEILESPKK (243 aa)) is disordered. Residues 226 to 241 (RRSKLRKPKPVPLRKK) carry the Bipartite nuclear localization signal 1 motif. Over residues 226 to 242 (RRSKLRKPKPVPLRKKA) the composition is skewed to basic residues. Serine 228 carries the phosphoserine; by AURKC modification. 2 positions are modified to phosphoserine: serine 248 and serine 276. Polar residues-rich tracts occupy residues 296–305 (GTLSSDTNDS), 377–413 (LSQTSSKPDPSQWESPSFNPFGSHSVLQNSPPLSSEG), and 431–447 (PTTTLTSSDFCSPTGNH). A phosphoserine mark is found at serine 381 and serine 406. A Bipartite nuclear localization signal 2 motif is present at residues 455-471 (PKKAKSRLITSGCKVKK). At serine 483 the chain carries Phosphoserine. Positions 493–526 (ISDISNRDGHATDEEKLASTSCGQKSAGAEVKGE) are disordered. Basic and acidic residues predominate over residues 497–509 (SNRDGHATDEEKL). Tyrosine 533 carries the post-translational modification Phosphotyrosine. Serine 591 is modified (phosphoserine). Positions 610–805 (IREEIITKEI…ELIAKLGKTD (196 aa)) form a coiled coil. Residues 701–805 (VLEGFKKNEE…ELIAKLGKTD (105 aa)) are interaction with CH-TOG.

This sequence belongs to the TACC family. In terms of assembly, interacts with KIAA0097/CH-TOG and with the oncogenic transcription factor YEATS4. Interacts with AURKA, AURKB and AURKC. Interacts with LSM7, TDRD7 and SNRPG. Interacts with GCN5L2 and PCAF. Interacts with the thyroid hormone receptors THRB and THRA, predominantly with isoform alpha-2. The interaction with THRA isoform alpha-1 and THRB is decreased in the presence of thyroid hormone T3. Also interacts with other nuclear receptors, including ESR1, NR3C1, PPARG, RARA and RXRA, preferentially in the absence of their hormonal ligands. Post-translationally, isoform 1 is heavily phosphorylated; isoform 6 is not. As to expression, isoform 1, isoform 3 and isoform 5 are ubiquitous. Isoform 2 is strongly expressed in the brain, weakly detectable in lung and colon, and overexpressed in gastric cancer. Isoform 4 is not detected in normal tissues, but strong expression was found in gastric cancer tissues. Down-regulated in a subset of cases of breast cancer.

The protein resides in the cytoplasm. Its subcellular location is the nucleus. It is found in the cytoskeleton. It localises to the microtubule organizing center. The protein localises to the centrosome. The protein resides in the midbody. Its subcellular location is the membrane. Functionally, involved in transcription regulation induced by nuclear receptors, including in T3 thyroid hormone and all-trans retinoic acid pathways. Might promote the nuclear localization of the receptors. Likely involved in the processes that promote cell division prior to the formation of differentiated tissues. This chain is Transforming acidic coiled-coil-containing protein 1 (TACC1), found in Homo sapiens (Human).